Consider the following 217-residue polypeptide: ITG-like peptide (217 aa).

An N-terminal signal peptide occupies residues 1–21 (MHRTMAVTAVLVLSAAGAAHA). A propeptide spanning residues 22–208 (WGGLFNRFSS…REFVQHTAGE (187 aa)) is cleaved from the precursor.

ITG-like peptide: Expressed in corpora cardiaca (CC), corpora allata (CA), antennal lobe (AL) and gnathal ganglion (GNG) (at protein level). Expression in AL detected in all animals, expression in GNG detected in most animals and in CA and CC detected in few animals (at protein level).

It is found in the secreted. The protein is ITG-like peptide of Agrotis ipsilon (Black cutworm moth).